The primary structure comprises 55 residues: Large ribosomal subunit protein bL33B (55 aa).

This sequence belongs to the bacterial ribosomal protein bL33 family.

The sequence is that of Large ribosomal subunit protein bL33B from Mycobacteroides abscessus (strain ATCC 19977 / DSM 44196 / CCUG 20993 / CIP 104536 / JCM 13569 / NCTC 13031 / TMC 1543 / L948) (Mycobacterium abscessus).